A 149-amino-acid polypeptide reads, in one-letter code: MIKILGEGKGKEILKSLSEKLDEIVKKEIGNVNTNVILVSKDQIKEMNREFRGEDFPTDVLTFPLFEEVYGEIYICPEVVEENAKEYNNTFEKELIEVVIHGILHLAGYDHEFEDKNAKEMFEKQHIYVEEVWNEWRSSLSGGTGQEGT.

Residues H101, H105, and H111 each contribute to the Zn(2+) site.

It belongs to the endoribonuclease YbeY family. Zn(2+) is required as a cofactor.

Its subcellular location is the cytoplasm. Its function is as follows. Single strand-specific metallo-endoribonuclease involved in late-stage 70S ribosome quality control and in maturation of the 3' terminus of the 16S rRNA. This is Endoribonuclease YbeY from Thermotoga neapolitana (strain ATCC 49049 / DSM 4359 / NBRC 107923 / NS-E).